Consider the following 122-residue polypeptide: Large ribosomal subunit protein uL14 (122 aa).

Belongs to the universal ribosomal protein uL14 family. In terms of assembly, part of the 50S ribosomal subunit. Forms a cluster with proteins L3 and L19. In the 70S ribosome, L14 and L19 interact and together make contacts with the 16S rRNA in bridges B5 and B8.

In terms of biological role, binds to 23S rRNA. Forms part of two intersubunit bridges in the 70S ribosome. In Brucella anthropi (strain ATCC 49188 / DSM 6882 / CCUG 24695 / JCM 21032 / LMG 3331 / NBRC 15819 / NCTC 12168 / Alc 37) (Ochrobactrum anthropi), this protein is Large ribosomal subunit protein uL14.